Reading from the N-terminus, the 304-residue chain is Aspartate carbamoyltransferase catalytic subunit (304 aa).

Carbamoyl phosphate-binding residues include Arg-49 and Thr-50. Position 77 (Lys-77) interacts with L-aspartate. Arg-99, His-127, and Gln-130 together coordinate carbamoyl phosphate. Positions 160 and 211 each coordinate L-aspartate. Carbamoyl phosphate contacts are provided by Ala-252 and Pro-253.

Belongs to the aspartate/ornithine carbamoyltransferase superfamily. ATCase family. As to quaternary structure, heterododecamer (2C3:3R2) of six catalytic PyrB chains organized as two trimers (C3), and six regulatory PyrI chains organized as three dimers (R2).

The catalysed reaction is carbamoyl phosphate + L-aspartate = N-carbamoyl-L-aspartate + phosphate + H(+). The protein operates within pyrimidine metabolism; UMP biosynthesis via de novo pathway; (S)-dihydroorotate from bicarbonate: step 2/3. Its function is as follows. Catalyzes the condensation of carbamoyl phosphate and aspartate to form carbamoyl aspartate and inorganic phosphate, the committed step in the de novo pyrimidine nucleotide biosynthesis pathway. The chain is Aspartate carbamoyltransferase catalytic subunit from Bacillus cereus (strain ZK / E33L).